A 310-amino-acid polypeptide reads, in one-letter code: N-acetylmuramic acid 6-phosphate etherase (310 aa).

The 164-residue stretch at 64 to 227 folds into the SIS domain; it reads ITARLKSKGR…STSVMIKLGK (164 aa). The Proton donor role is filled by E92. E123 is a catalytic residue.

The protein belongs to the GCKR-like family. MurNAc-6-P etherase subfamily. In terms of assembly, homodimer.

It carries out the reaction N-acetyl-D-muramate 6-phosphate + H2O = N-acetyl-D-glucosamine 6-phosphate + (R)-lactate. The protein operates within amino-sugar metabolism; N-acetylmuramate degradation. In terms of biological role, specifically catalyzes the cleavage of the D-lactyl ether substituent of MurNAc 6-phosphate, producing GlcNAc 6-phosphate and D-lactate. The chain is N-acetylmuramic acid 6-phosphate etherase from Prochlorococcus marinus (strain NATL1A).